The following is a 131-amino-acid chain: MSWQTYVDNHLLCEIEGDHLSSAAILGQDGGVWAQSSHFPQFKPEEITAIMNDFAEPGSLAPTGLYLGGTKYMVIQGEPGAIIPGKKGPGGVTIEKTNQALIIGIYDKPMTPGQCNMIVERLGDYLIDTGL.

It belongs to the profilin family. In terms of assembly, occurs in many kinds of cells as a complex with monomeric actin in a 1:1 ratio.

It is found in the cytoplasm. Its subcellular location is the cytoskeleton. Functionally, binds to actin and affects the structure of the cytoskeleton. At high concentrations, profilin prevents the polymerization of actin, whereas it enhances it at low concentrations. By binding to PIP2, it inhibits the formation of IP3 and DG. In Arachis hypogaea (Peanut), this protein is Profilin.